A 952-amino-acid chain; its full sequence is Anion exchange protein 4 (952 aa).

Residues 1–41 (MKLPGQGDFESSDAHENAHSEEPDSGLGPGPGLNGPSGIDI) are disordered. Basic and acidic residues predominate over residues 12-22 (SDAHENAHSEE). 4 helical membrane passes run 385-405 (AVFY…GLLG), 413-433 (GVLE…LMAG), 470-490 (VGIW…SLLV), and 501-521 (FCAL…LNLI). N-linked (GlcNAc...) asparagine glycans are attached at residues asparagine 546 and asparagine 569. A run of 7 helical transmembrane segments spans residues 593–613 (VPDI…CAIA), 634–654 (FSSV…GLAT), 681–701 (PWWL…LIFM), 727–747 (LFCV…WYVS), 784–804 (GLVV…LKFI), 807–827 (PVLY…IQFV), and 870–890 (VVKS…LVAI). The disordered stretch occupies residues 915 to 938 (ETIPENRSEPEHLFSGNDSEDSEL). Residues asparagine 920, asparagine 931, and asparagine 948 are each glycosylated (N-linked (GlcNAc...) asparagine).

Belongs to the anion exchanger (TC 2.A.31) family. In terms of tissue distribution, expressed in submandibular gland (SMG) duct and cortical collecting duct (CCD) of kidney. Lower expressed in duodenal villi.

The protein resides in the basolateral cell membrane. The enzyme catalyses 2 hydrogencarbonate(out) + chloride(in) + Na(+)(out) = 2 hydrogencarbonate(in) + chloride(out) + Na(+)(in). It catalyses the reaction K(+)(in) + 2 hydrogencarbonate(in) + chloride(out) = K(+)(out) + 2 hydrogencarbonate(out) + chloride(in). It carries out the reaction Li(+)(in) + 2 hydrogencarbonate(in) + chloride(out) = Li(+)(out) + 2 hydrogencarbonate(out) + chloride(in). The catalysed reaction is Rb(+)(in) + 2 hydrogencarbonate(in) + chloride(out) = Rb(+)(out) + 2 hydrogencarbonate(out) + chloride(in). The enzyme catalyses Cs(+)(in) + 2 hydrogencarbonate(in) + chloride(out) = Cs(+)(out) + 2 hydrogencarbonate(out) + chloride(in). With respect to regulation, cl(-)/HCO3(-) exchanger activity is substantially increased in response to 5 uM isoproterenol. Cl(-)/HCO3(-) exchanger activity is increased by both forskolin and coexpression with the catalytic subunit alpha of PKA. In terms of biological role, electroneutral Cl(-)/HCO3(-) antiporter that favors chloride ion entry and efflux of hydrogencarbonate and sodium ion across the basolateral membrane and may participate in salivary secretion. Also mediates Cl(-)/HCO3(-) exchange activity in the presence of K(+) as well as Cs(+), Li(+), and Rb(+). Does not contribute to Cl(-)/HCO3(-) exchanger in the apical membrane of the upper villous epithelium. The polypeptide is Anion exchange protein 4 (Mus musculus (Mouse)).